Here is a 216-residue protein sequence, read N- to C-terminus: Oligoribonuclease (216 aa).

One can recognise an Exonuclease domain in the interval Val-6–Leu-171. Tyr-128 is an active-site residue.

Belongs to the oligoribonuclease family.

The protein resides in the cytoplasm. 3'-to-5' exoribonuclease specific for small oligoribonucleotides. The sequence is that of Oligoribonuclease from Nocardia farcinica (strain IFM 10152).